A 546-amino-acid polypeptide reads, in one-letter code: Choline oxidase (546 aa).

FAD-binding positions include 23-24, Glu-44, Trp-71, 90-92, 96-103, Ala-232, and Tyr-465; these read SA, AKV, and CSSHNSCI. His-99 is modified (tele-8alpha-FAD histidine). His-466 acts as the Proton acceptor in catalysis. FAD is bound by residues Ala-500 and 510–512; that span reads NPN.

This sequence belongs to the GMC oxidoreductase family. As to quaternary structure, homodimer. Requires FAD as cofactor.

The catalysed reaction is choline + 2 O2 + H2O = glycine betaine + 2 H2O2 + H(+). It participates in amine and polyamine biosynthesis; betaine biosynthesis via choline pathway; betaine from choline: step 1/1. In terms of biological role, catalyzes the two-step oxidative conversion of choline to glycine-betaine with betaine aldehyde as an intermediate. Glycine-betaine accumulates to high levels in the cytoplasm of cells to prevent dehydration and plasmolysis in adverse hyperosmotic environments. Accepts either choline or the reaction intermediate betaine-aldehyde as substrate. The chain is Choline oxidase (codA) from Arthrobacter globiformis.